A 226-amino-acid polypeptide reads, in one-letter code: Ribose-5-phosphate isomerase A (226 aa).

Substrate-binding positions include Thr33–Thr36, Asp86–Asp89, and Lys99–Gly102. Glu108 serves as the catalytic Proton acceptor. Lys126 contacts substrate.

Belongs to the ribose 5-phosphate isomerase family. As to quaternary structure, homodimer.

It carries out the reaction aldehydo-D-ribose 5-phosphate = D-ribulose 5-phosphate. It functions in the pathway carbohydrate degradation; pentose phosphate pathway; D-ribose 5-phosphate from D-ribulose 5-phosphate (non-oxidative stage): step 1/1. Catalyzes the reversible conversion of ribose-5-phosphate to ribulose 5-phosphate. This is Ribose-5-phosphate isomerase A from Bordetella bronchiseptica (strain ATCC BAA-588 / NCTC 13252 / RB50) (Alcaligenes bronchisepticus).